We begin with the raw amino-acid sequence, 432 residues long: Glutamate-1-semialdehyde 2,1-aminomutase (432 aa).

An N6-(pyridoxal phosphate)lysine modification is found at K272.

Belongs to the class-III pyridoxal-phosphate-dependent aminotransferase family. HemL subfamily. Homodimer. Requires pyridoxal 5'-phosphate as cofactor.

The protein localises to the cytoplasm. The enzyme catalyses (S)-4-amino-5-oxopentanoate = 5-aminolevulinate. It functions in the pathway porphyrin-containing compound metabolism; protoporphyrin-IX biosynthesis; 5-aminolevulinate from L-glutamyl-tRNA(Glu): step 2/2. Its pathway is porphyrin-containing compound metabolism; chlorophyll biosynthesis. This is Glutamate-1-semialdehyde 2,1-aminomutase from Cyanothece sp. (strain PCC 7425 / ATCC 29141).